The chain runs to 479 residues: Membrane-bound lytic murein transglycosylase F (479 aa).

The signal sequence occupies residues Met1–Ala15. Residues Gly16–Val258 are non-LT domain. The segment at Arg260–Pro479 is LT domain. The active site involves Glu303. Positions Leu457 to Pro479 are disordered. Residues Glu461 to Gln470 show a composition bias toward basic and acidic residues.

It in the N-terminal section; belongs to the bacterial solute-binding protein 3 family. The protein in the C-terminal section; belongs to the transglycosylase Slt family.

It localises to the cell outer membrane. The enzyme catalyses Exolytic cleavage of the (1-&gt;4)-beta-glycosidic linkage between N-acetylmuramic acid (MurNAc) and N-acetylglucosamine (GlcNAc) residues in peptidoglycan, from either the reducing or the non-reducing ends of the peptidoglycan chains, with concomitant formation of a 1,6-anhydrobond in the MurNAc residue.. In terms of biological role, murein-degrading enzyme that degrades murein glycan strands and insoluble, high-molecular weight murein sacculi, with the concomitant formation of a 1,6-anhydromuramoyl product. Lytic transglycosylases (LTs) play an integral role in the metabolism of the peptidoglycan (PG) sacculus. Their lytic action creates space within the PG sacculus to allow for its expansion as well as for the insertion of various structures such as secretion systems and flagella. The chain is Membrane-bound lytic murein transglycosylase F from Shewanella pealeana (strain ATCC 700345 / ANG-SQ1).